The chain runs to 305 residues: UDP-3-O-acyl-N-acetylglucosamine deacetylase (305 aa).

Zn(2+) contacts are provided by H79, H238, and D242. The Proton donor role is filled by H265.

The protein belongs to the LpxC family. It depends on Zn(2+) as a cofactor.

It carries out the reaction a UDP-3-O-[(3R)-3-hydroxyacyl]-N-acetyl-alpha-D-glucosamine + H2O = a UDP-3-O-[(3R)-3-hydroxyacyl]-alpha-D-glucosamine + acetate. Its pathway is glycolipid biosynthesis; lipid IV(A) biosynthesis; lipid IV(A) from (3R)-3-hydroxytetradecanoyl-[acyl-carrier-protein] and UDP-N-acetyl-alpha-D-glucosamine: step 2/6. Catalyzes the hydrolysis of UDP-3-O-myristoyl-N-acetylglucosamine to form UDP-3-O-myristoylglucosamine and acetate, the committed step in lipid A biosynthesis. This chain is UDP-3-O-acyl-N-acetylglucosamine deacetylase, found in Haemophilus influenzae (strain 86-028NP).